The sequence spans 168 residues: MEHSRFLSCLILAALLSQVNPRILKVLEPEDKVMLECNSSITLLQGTEGQEVSGNNKTRDLGKRIQDPRGMYRCGENTQQLILQVYYRMCQNCVELDTATLAGMIITDIIATVLLALGVYCFAGHETGRFSRAADTQALMGNDQLYQPLRERNDAQYSRLGDKWARNK.

A signal peptide spans 1-21 (MEHSRFLSCLILAALLSQVNP). Topologically, residues 22–102 (RILKVLEPED…CVELDTATLA (81 aa)) are extracellular. The cysteines at positions 37 and 74 are disulfide-linked. 2 N-linked (GlcNAc...) asparagine glycosylation sites follow: Asn-38 and Asn-56. The chain crosses the membrane as a helical span at residues 103–123 (GMIITDIIATVLLALGVYCFA). Residues 124 to 168 (GHETGRFSRAADTQALMGNDQLYQPLRERNDAQYSRLGDKWARNK) lie on the Cytoplasmic side of the membrane. Positions 135–163 (DTQALMGNDQLYQPLRERNDAQYSRLGDK) constitute an ITAM domain. Residues Tyr-146 and Tyr-157 each carry the phosphotyrosine modification.

The TCR-CD3 complex is composed of a CD3D/CD3E and a CD3G/CD3E heterodimers that preferentially associate with TCRalpha and TCRbeta, respectively, to form TCRalpha/CD3E/CD3G and TCRbeta/CD3G/CD3E trimers. In turn, the hexamer interacts with CD3Z homodimer to form the TCR-CD3 complex. Alternatively, TCRalpha and TCRbeta can be replaced by TCRgamma and TCRdelta. Interacts with coreceptors CD4 and CD8. Phosphorylated on Tyr residues after T-cell receptor triggering by LCK in association with CD4/CD8. In terms of tissue distribution, CD3D is mostly present on T-lymphocytes with its TCR-CD3 partners. Present also in fetal NK-cells.

The protein resides in the cell membrane. Part of the TCR-CD3 complex present on T-lymphocyte cell surface that plays an essential role in adaptive immune response. When antigen presenting cells (APCs) activate T-cell receptor (TCR), TCR-mediated signals are transmitted across the cell membrane by the CD3 chains CD3D, CD3E, CD3G and CD3Z. All CD3 chains contain immunoreceptor tyrosine-based activation motifs (ITAMs) in their cytoplasmic domain. Upon TCR engagement, these motifs become phosphorylated by Src family protein tyrosine kinases LCK and FYN, resulting in the activation of downstream signaling pathways. In addition of this role of signal transduction in T-cell activation, CD3D plays an essential role in thymocyte differentiation. Indeed, participates in correct intracellular TCR-CD3 complex assembly and surface expression. In absence of a functional TCR-CD3 complex, thymocytes are unable to differentiate properly. Interacts with CD4 and CD8 and thus serves to establish a functional link between the TCR and coreceptors CD4 and CD8, which is needed for activation and positive selection of CD4 or CD8 T-cells. The protein is T-cell surface glycoprotein CD3 delta chain (CD3D) of Bos taurus (Bovine).